Consider the following 344-residue polypeptide: Fructose-bisphosphate aldolase (344 aa).

Ser53 lines the D-glyceraldehyde 3-phosphate pocket. Catalysis depends on Asp95, which acts as the Proton donor. Zn(2+)-binding residues include His96, Asp131, Glu161, and His212. Residue Gly213 participates in dihydroxyacetone phosphate binding. His252 lines the Zn(2+) pocket. Residues 253 to 255 (GGS) and 274 to 277 (NVDT) contribute to the dihydroxyacetone phosphate site.

It belongs to the class II fructose-bisphosphate aldolase family. Requires Zn(2+) as cofactor.

It carries out the reaction beta-D-fructose 1,6-bisphosphate = D-glyceraldehyde 3-phosphate + dihydroxyacetone phosphate. Its pathway is carbohydrate degradation; glycolysis; D-glyceraldehyde 3-phosphate and glycerone phosphate from D-glucose: step 4/4. Functionally, catalyzes the aldol condensation of dihydroxyacetone phosphate (DHAP or glycerone-phosphate) with glyceraldehyde 3-phosphate (G3P) to form fructose 1,6-bisphosphate (FBP) in gluconeogenesis and the reverse reaction in glycolysis. In Corynebacterium glutamicum (strain ATCC 13032 / DSM 20300 / JCM 1318 / BCRC 11384 / CCUG 27702 / LMG 3730 / NBRC 12168 / NCIMB 10025 / NRRL B-2784 / 534), this protein is Fructose-bisphosphate aldolase (fba).